Reading from the N-terminus, the 246-residue chain is Small ribosomal subunit protein uS2 (246 aa).

Belongs to the universal ribosomal protein uS2 family.

The sequence is that of Small ribosomal subunit protein uS2 from Lachnoclostridium phytofermentans (strain ATCC 700394 / DSM 18823 / ISDg) (Clostridium phytofermentans).